Consider the following 425-residue polypeptide: Homogentisate 1,2-dioxygenase (425 aa).

The active-site Proton acceptor is the H283. Fe cation is bound by residues H326 and E332. Positions 341 and 362 each coordinate homogentisate. H362 is a Fe cation binding site.

Belongs to the homogentisate dioxygenase family. As to quaternary structure, hexamer; dimer of trimers. The cofactor is Fe cation.

It carries out the reaction homogentisate + O2 = 4-maleylacetoacetate + H(+). It functions in the pathway amino-acid degradation; L-phenylalanine degradation; acetoacetate and fumarate from L-phenylalanine: step 4/6. Involved in the catabolism of homogentisate (2,5-dihydroxyphenylacetate or 2,5-OH-PhAc), a central intermediate in the degradation of phenylalanine and tyrosine. Catalyzes the oxidative ring cleavage of the aromatic ring of homogentisate to yield maleylacetoacetate. The sequence is that of Homogentisate 1,2-dioxygenase from Caulobacter vibrioides (strain ATCC 19089 / CIP 103742 / CB 15) (Caulobacter crescentus).